A 227-amino-acid chain; its full sequence is 7-cyano-7-deazaguanine synthase (227 aa).

Residue 16–26 (FSGGQDSTTCL) coordinates ATP. Zn(2+)-binding residues include cysteine 194, cysteine 202, cysteine 205, and cysteine 208.

Belongs to the QueC family. It depends on Zn(2+) as a cofactor.

The catalysed reaction is 7-carboxy-7-deazaguanine + NH4(+) + ATP = 7-cyano-7-deazaguanine + ADP + phosphate + H2O + H(+). Its pathway is purine metabolism; 7-cyano-7-deazaguanine biosynthesis. Functionally, catalyzes the ATP-dependent conversion of 7-carboxy-7-deazaguanine (CDG) to 7-cyano-7-deazaguanine (preQ(0)). The polypeptide is 7-cyano-7-deazaguanine synthase (Haemophilus influenzae (strain 86-028NP)).